The primary structure comprises 430 residues: Proteinase-activated receptor 1 (430 aa).

Positions 1–21 are cleaved as a signal peptide; it reads MGPRRLLIVALGLSLCGPLLS. A propeptide spans 22–41 (removed for receptor activation); the sequence is SRVPMSQPESERTDATVNPR. The Extracellular portion of the chain corresponds to 42–107; that stretch reads SFFLRNPSEN…SGYLTSPWLT (66 aa). N-linked (GlcNAc...) asparagine glycans are attached at residues N67 and N80. The chain crosses the membrane as a helical span at residues 108–133; sequence LFMPSVYTIVFIVSLPLNVLAIAVFV. The Cytoplasmic portion of the chain corresponds to 134–142; sequence LRMKVKKPA. A helical membrane pass occupies residues 143 to 162; it reads VVYMLHLAMADVLFVSVLPF. The Extracellular segment spans residues 163-181; the sequence is KISYYFSGTDWQFGSGMCR. Cysteines 180 and 259 form a disulfide. A helical membrane pass occupies residues 182 to 203; it reads FATAAFYGNMYASIMLMTVISI. Over 204–223 the chain is Cytoplasmic; sequence DRFLAVVYPIQSLSWRTLGR. A helical membrane pass occupies residues 224–244; sequence ANFTCVVIWVMAIMGVVPLLL. Topologically, residues 245 to 273 are extracellular; it reads KEQTTRVPGLNITTCHDVLSENLMQGFYS. Residue N255 is glycosylated (N-linked (GlcNAc...) asparagine). A helical transmembrane segment spans residues 274–293; that stretch reads YYFSAFSAIFFLVPLIVSTV. The Cytoplasmic portion of the chain corresponds to 294–316; that stretch reads CYTSIIRCLSSSAVANRSKKSRA. The chain crosses the membrane as a helical span at residues 317–339; that stretch reads LFLSAAVFCIFIVCFGPTNVLLI. Residues 340 to 354 are Extracellular-facing; the sequence is VHYLFLSDSPGTEAA. The chain crosses the membrane as a helical span at residues 355 to 379; sequence YFAYLLCVCVSSVSCCIDPLIYYYA. Residues 380 to 430 lie on the Cytoplasmic side of the membrane; sequence SSECQRHLYSILCCKESSDPNSCNSTGQLMPSKMDTCSSHLNNSIYKKLLA. Position 423 is a phosphoserine (S423).

This sequence belongs to the G-protein coupled receptor 1 family. In terms of processing, proteolytic cleavage by thrombin generates a new N-terminus that functions as a tethered ligand. Also proteolytically cleaved by cathepsin CTSG. Post-translationally, phosphorylated in the C-terminal tail; probably mediating desensitization prior to the uncoupling and internalization of the receptor.

Its subcellular location is the cell membrane. In terms of biological role, high affinity receptor that binds the activated thrombin, leading to calcium release from intracellular stores. The thrombin-activated receptor signaling pathway is mediated through PTX-insensitive G proteins, activation of phospholipase C resulting in the production of 1D-myo-inositol 1,4,5-trisphosphate (InsP3) which binds to InsP3 receptors causing calcium release from the stores. In astrocytes, the calcium released into the cytosol allows the Ca(2+)-dependent release of L-glutamate into the synaptic cleft through BEST1, that targets the neuronal postsynaptic GRIN2A/NMDAR receptor resulting in the synaptic plasticity regulation. May play a role in platelets activation and in vascular development. Mediates up-regulation of pro-inflammatory cytokines, such as MCP-1/CCL2 and IL6, triggered by coagulation factor Xa (F10) in cardiac fibroblasts and umbilical vein endothelial cells. This is Proteinase-activated receptor 1 from Mus musculus (Mouse).